A 170-amino-acid chain; its full sequence is NADH-quinone oxidoreductase subunit B (170 aa).

[4Fe-4S] cluster contacts are provided by Cys-46, Cys-47, Cys-111, and Cys-141.

The protein belongs to the complex I 20 kDa subunit family. As to quaternary structure, NDH-1 is composed of 14 different subunits. Subunits NuoB, C, D, E, F, and G constitute the peripheral sector of the complex. [4Fe-4S] cluster is required as a cofactor.

It localises to the cell membrane. The enzyme catalyses a quinone + NADH + 5 H(+)(in) = a quinol + NAD(+) + 4 H(+)(out). Its function is as follows. NDH-1 shuttles electrons from NADH, via FMN and iron-sulfur (Fe-S) centers, to quinones in the respiratory chain. The immediate electron acceptor for the enzyme in this species is believed to be a menaquinone. Couples the redox reaction to proton translocation (for every two electrons transferred, four hydrogen ions are translocated across the cytoplasmic membrane), and thus conserves the redox energy in a proton gradient. The chain is NADH-quinone oxidoreductase subunit B from Geobacillus sp. (strain WCH70).